Reading from the N-terminus, the 678-residue chain is Glycine--tRNA ligase beta subunit (678 aa).

This sequence belongs to the class-II aminoacyl-tRNA synthetase family. Tetramer of two alpha and two beta subunits.

Its subcellular location is the cytoplasm. The catalysed reaction is tRNA(Gly) + glycine + ATP = glycyl-tRNA(Gly) + AMP + diphosphate. The chain is Glycine--tRNA ligase beta subunit from Streptococcus pneumoniae (strain P1031).